The following is a 231-amino-acid chain: 2-C-methyl-D-erythritol 4-phosphate cytidylyltransferase (231 aa).

Belongs to the IspD/TarI cytidylyltransferase family. IspD subfamily.

The catalysed reaction is 2-C-methyl-D-erythritol 4-phosphate + CTP + H(+) = 4-CDP-2-C-methyl-D-erythritol + diphosphate. Its pathway is isoprenoid biosynthesis; isopentenyl diphosphate biosynthesis via DXP pathway; isopentenyl diphosphate from 1-deoxy-D-xylulose 5-phosphate: step 2/6. Functionally, catalyzes the formation of 4-diphosphocytidyl-2-C-methyl-D-erythritol from CTP and 2-C-methyl-D-erythritol 4-phosphate (MEP). The polypeptide is 2-C-methyl-D-erythritol 4-phosphate cytidylyltransferase (Clostridium kluyveri (strain NBRC 12016)).